Consider the following 275-residue polypeptide: 2,3,4,5-tetrahydropyridine-2,6-dicarboxylate N-succinyltransferase (275 aa).

Substrate-binding residues include R108 and D145.

It belongs to the transferase hexapeptide repeat family. Homotrimer.

Its subcellular location is the cytoplasm. The enzyme catalyses (S)-2,3,4,5-tetrahydrodipicolinate + succinyl-CoA + H2O = (S)-2-succinylamino-6-oxoheptanedioate + CoA. Its pathway is amino-acid biosynthesis; L-lysine biosynthesis via DAP pathway; LL-2,6-diaminopimelate from (S)-tetrahydrodipicolinate (succinylase route): step 1/3. The protein is 2,3,4,5-tetrahydropyridine-2,6-dicarboxylate N-succinyltransferase of Roseobacter denitrificans (strain ATCC 33942 / OCh 114) (Erythrobacter sp. (strain OCh 114)).